The chain runs to 500 residues: MLSPHGGILQDLVARDAEKKDRLLHEAQGLPQWNLTARQLCDIELILNGGFSPLTGFLGKEDYESVVQNSRLTSGLLWTIPITLDVDEEFAKSVNLGERIALLQDDDIFVAIITVSDIYTPDKKVEADKVFRGDEEHPAIQYLNETAGDIYLGGELEAIQLPAHYDYLNLRKSPAALRADFATQQWDRVVAFQTRNPMHRAHRELTIRAAKEHNAKVLLHPVVGLTKPGDIDYHTRIKVYKEIVKRYPEGIAQLALLPLAMRMAGDREAVWHAIIRKNYGATHFIVGRDHAGPGTNSKGDDFYGPYDAQVLVESYKNELGIEVVPFKLITYLPDKDIYLPVDEIDGSVKTLTISGTELRKRLREGTDIPDWFTYPEIVEILRQYNPPRYRQGFVIVVNHENPKRIANALLSTFLQVGGGRQYKIFDHQGQPQLLELIPDFVKSGTGLIVTSPLPSSVDAHNIYELNTYPSAHIKVSATEPVTEIVQKTVFFLEDNKFFQF.

The N-terminal stretch occupies residues 1-165 (MLSPHGGILQ…LEAIQLPAHY (165 aa)). A catalytic region spans residues 166–390 (DYLNLRKSPA…LRQYNPPRYR (225 aa)). Residue Q193 coordinates sulfate. Residues 193–196 (QTRN) and 287–290 (GRDH) each bind ATP. Catalysis depends on residues T194, R195, and N196. R195 is a binding site for sulfate. Position 291 (A291) interacts with sulfate. I329 is a binding site for ATP. The segment at 391 to 500 (QGFVIVVNHE…FLEDNKFFQF (110 aa)) is required for oligomerization; adenylyl-sulfate kinase-like.

This sequence belongs to the sulfate adenylyltransferase family. As to quaternary structure, homohexamer. Dimer of trimers.

Its subcellular location is the cytoplasm. The catalysed reaction is sulfate + ATP + H(+) = adenosine 5'-phosphosulfate + diphosphate. It participates in sulfur metabolism; hydrogen sulfide biosynthesis; sulfite from sulfate: step 1/3. Functionally, catalyzes the first intracellular reaction of sulfate assimilation, forming adenosine-5'-phosphosulfate (APS) from inorganic sulfate and ATP. Plays an important role in sulfate activation as a component of the biosynthesis pathway of sulfur-containing amino acids. The protein is Sulfate adenylyltransferase of Eremothecium gossypii (strain ATCC 10895 / CBS 109.51 / FGSC 9923 / NRRL Y-1056) (Yeast).